The primary structure comprises 175 residues: ATP-dependent protease subunit HslV (175 aa).

Threonine 2 is a catalytic residue. Na(+) is bound by residues glycine 157, cysteine 160, and threonine 163.

It belongs to the peptidase T1B family. HslV subfamily. In terms of assembly, a double ring-shaped homohexamer of HslV is capped on each side by a ring-shaped HslU homohexamer. The assembly of the HslU/HslV complex is dependent on binding of ATP.

The protein resides in the cytoplasm. It catalyses the reaction ATP-dependent cleavage of peptide bonds with broad specificity.. With respect to regulation, allosterically activated by HslU binding. Protease subunit of a proteasome-like degradation complex believed to be a general protein degrading machinery. The protein is ATP-dependent protease subunit HslV of Photobacterium profundum (strain SS9).